The following is a 279-amino-acid chain: Pantothenate synthetase (279 aa).

Position 26–33 (26–33 (MGNLHEGH)) interacts with ATP. The active-site Proton donor is His33. Gln57 is a (R)-pantoate binding site. Gln57 lines the beta-alanine pocket. 144-147 (GKKD) is an ATP binding site. Gln150 provides a ligand contact to (R)-pantoate. Residues Val173 and 181–184 (LSSR) each bind ATP.

This sequence belongs to the pantothenate synthetase family. As to quaternary structure, homodimer.

It localises to the cytoplasm. The enzyme catalyses (R)-pantoate + beta-alanine + ATP = (R)-pantothenate + AMP + diphosphate + H(+). The protein operates within cofactor biosynthesis; (R)-pantothenate biosynthesis; (R)-pantothenate from (R)-pantoate and beta-alanine: step 1/1. In terms of biological role, catalyzes the condensation of pantoate with beta-alanine in an ATP-dependent reaction via a pantoyl-adenylate intermediate. The polypeptide is Pantothenate synthetase (Burkholderia cenocepacia (strain ATCC BAA-245 / DSM 16553 / LMG 16656 / NCTC 13227 / J2315 / CF5610) (Burkholderia cepacia (strain J2315))).